The sequence spans 505 residues: Outer capsid protein VP5 (505 aa).

The interval 1 to 42 (MGKFTSFLKRAGNATKRALTSDSAKKMYKLAGKTLQRVVESE) is involved in membrane permeabilization.

The protein belongs to the orbivirus VP5 family.

The protein localises to the virion. In terms of biological role, VP5 protein is one of the two proteins (with VP2) which constitute the virus particle outer capsid. Acts as a membrane permeabilization protein that mediates release of viral particles from endosomal compartments into the cytoplasm. Permeabilization activity is probably negatively regulated by VP2 and is triggered by endosomal degradation of VP2 and exposure to low pH. This chain is Outer capsid protein VP5 (Segment-6), found in African horse sickness virus (AHSV).